A 253-amino-acid chain; its full sequence is Alpha-acetolactate decarboxylase (253 aa).

The protein belongs to the alpha-acetolactate decarboxylase family.

It carries out the reaction (2S)-2-acetolactate + H(+) = (R)-acetoin + CO2. It functions in the pathway polyol metabolism; (R,R)-butane-2,3-diol biosynthesis; (R,R)-butane-2,3-diol from pyruvate: step 2/3. Converts acetolactate into acetoin. The protein is Alpha-acetolactate decarboxylase (alsD) of Bacillus licheniformis (strain ATCC 14580 / DSM 13 / JCM 2505 / CCUG 7422 / NBRC 12200 / NCIMB 9375 / NCTC 10341 / NRRL NRS-1264 / Gibson 46).